Here is a 340-residue protein sequence, read N- to C-terminus: Ferrochelatase (340 aa).

Positions 189 and 292 each coordinate Fe cation.

The protein belongs to the ferrochelatase family.

Its subcellular location is the cytoplasm. The enzyme catalyses heme b + 2 H(+) = protoporphyrin IX + Fe(2+). It participates in porphyrin-containing compound metabolism; protoheme biosynthesis; protoheme from protoporphyrin-IX: step 1/1. Catalyzes the ferrous insertion into protoporphyrin IX. The polypeptide is Ferrochelatase (Pseudomonas savastanoi pv. phaseolicola (strain 1448A / Race 6) (Pseudomonas syringae pv. phaseolicola (strain 1448A / Race 6))).